The primary structure comprises 184 residues: NADH-quinone oxidoreductase subunit B (184 aa).

4 residues coordinate [4Fe-4S] cluster: cysteine 63, cysteine 64, cysteine 128, and cysteine 158.

It belongs to the complex I 20 kDa subunit family. NDH-1 is composed of 14 different subunits. Subunits NuoB, C, D, E, F, and G constitute the peripheral sector of the complex. [4Fe-4S] cluster is required as a cofactor.

The protein resides in the cell inner membrane. It catalyses the reaction a quinone + NADH + 5 H(+)(in) = a quinol + NAD(+) + 4 H(+)(out). NDH-1 shuttles electrons from NADH, via FMN and iron-sulfur (Fe-S) centers, to quinones in the respiratory chain. The immediate electron acceptor for the enzyme in this species is believed to be ubiquinone. Couples the redox reaction to proton translocation (for every two electrons transferred, four hydrogen ions are translocated across the cytoplasmic membrane), and thus conserves the redox energy in a proton gradient. The chain is NADH-quinone oxidoreductase subunit B from Xylella fastidiosa (strain M23).